A 360-amino-acid polypeptide reads, in one-letter code: E3 ubiquitin-protein ligase HAKAI homolog (360 aa).

Residues 1-11 (MLQIRLRRDSP) show a composition bias toward basic and acidic residues. The disordered stretch occupies residues 1–24 (MLQIRLRRDSPTETGNGARPSPTE). Residues 72–107 (CVRCDFPIAIYGRLIPCDHAFCLECARSDSICYLCD) form an RING-type zinc finger. The C2H2-type zinc-finger motif lies at 123-148 (FICAAPHCLRSFLKKLDFEAHVHDLH). The segment at 156–360 (AEKEDGNQSD…QENRDGFGQE (205 aa)) is disordered. 3 stretches are compositionally biased toward polar residues: residues 163 to 179 (QSDV…SEST), 186 to 214 (SQLQ…QNYP), and 270 to 283 (YPTT…QFFN). The segment covering 293 to 304 (ESGGSEQSSLLG) has biased composition (low complexity).

It belongs to the Hakai family. As to quaternary structure, interacts with MTB and VIR. Associates with MTA, MTB, FIP37 and VIR to form the m6A writer complex which is essential for adenosine methylation at specific mRNA sequences.

The protein resides in the nucleus speckle. It is found in the nucleus. Its subcellular location is the nucleoplasm. The enzyme catalyses S-ubiquitinyl-[E2 ubiquitin-conjugating enzyme]-L-cysteine + [acceptor protein]-L-lysine = [E2 ubiquitin-conjugating enzyme]-L-cysteine + N(6)-ubiquitinyl-[acceptor protein]-L-lysine.. Functionally, probable E3 ubiquitin-protein ligase which is a subunit of the N6-methyltransferase complex, a multiprotein complex that mediates N6-methyladenosine (m6A) methylation at the 5'-[AG]GAC-3' consensus sites of some mRNAs. Associates with MTA, MTB, FIP37 and VIR to form the m6A writer complex which is essential for adenosine methylation at specific mRNA sequences. N6-methyladenosine (m6A) plays a role in mRNA stability, processing, translation efficiency and editing. The polypeptide is E3 ubiquitin-protein ligase HAKAI homolog (Arabidopsis thaliana (Mouse-ear cress)).